The chain runs to 329 residues: uncharacterized protein (329 aa).

2 coiled-coil regions span residues 57–119 (KKEE…LQEV) and 224–250 (AQRQKQEEVQEVLQEAEKTHQATLGNV).

This is an uncharacterized protein from Macaca fascicularis (Crab-eating macaque).